The primary structure comprises 321 residues: Ribose-phosphate pyrophosphokinase C (321 aa).

Residues D132 and D147 each contribute to the Mg(2+) site. Positions 214–229 are binding of phosphoribosylpyrophosphate; that stretch reads SGKVAIIIGSIADTCE.

Belongs to the ribose-phosphate pyrophosphokinase family. Requires Mg(2+) as cofactor.

Its subcellular location is the cytoplasm. The catalysed reaction is D-ribose 5-phosphate + ATP = 5-phospho-alpha-D-ribose 1-diphosphate + AMP + H(+). It functions in the pathway metabolic intermediate biosynthesis; 5-phospho-alpha-D-ribose 1-diphosphate biosynthesis; 5-phospho-alpha-D-ribose 1-diphosphate from D-ribose 5-phosphate (route I): step 1/1. This Dictyostelium discoideum (Social amoeba) protein is Ribose-phosphate pyrophosphokinase C (prsC).